The sequence spans 476 residues: Aspartate kinase Ask_Ect (476 aa).

One can recognise an ACT domain in the interval 405–476 (SAIGSDLKVK…ENHGDVIAAA (72 aa)).

This sequence belongs to the aspartokinase family. As to quaternary structure, monomer.

It is found in the cytoplasm. The enzyme catalyses L-aspartate + ATP = 4-phospho-L-aspartate + ADP. It functions in the pathway amine and polyamine biosynthesis; ectoine biosynthesis. Its activity is regulated as follows. Allosterically and strongly feedback inhibited by tryptophan. The presence of either 650 mM NaCl or KCl reduces the inhibition by tryptophan. In terms of biological role, involved in the biosynthesis of L-aspartate-beta-semialdehyde, which is an intermediate in the biosynthesis of ectoine, a highly soluble organic osmolyte, called compatible solute. Ectoine is used to avoid excessive water efflux, plasmolysis, molecular crowding of the cytoplasm, and cessation of growth in high salinity environments. Catalyzes the phosphorylation of the beta-carboxyl group of L-aspartate to yield 4-phospho-L-aspartate. In Stutzerimonas stutzeri (strain A1501) (Pseudomonas stutzeri), this protein is Aspartate kinase Ask_Ect (ask).